A 227-amino-acid chain; its full sequence is PKHD-type hydroxylase M446_1130 (227 aa).

Residues 78 to 178 enclose the Fe2OG dioxygenase domain; it reads QIFPPLFNRY…RVASFFWLQS (101 aa). Residues histidine 96, aspartate 98, and histidine 159 each coordinate Fe cation. A 2-oxoglutarate-binding site is contributed by arginine 169.

Requires Fe(2+) as cofactor. The cofactor is L-ascorbate.

This Methylobacterium sp. (strain 4-46) protein is PKHD-type hydroxylase M446_1130.